The chain runs to 202 residues: uncharacterized protein (202 aa).

An N-terminal signal peptide occupies residues 1-18; that stretch reads MKNRLLILSLLVSVPAFA.

This sequence to E.coli YebB.

This is an uncharacterized protein from Escherichia coli (strain K12).